The primary structure comprises 357 residues: Glycerol-3-phosphate dehydrogenase [NAD(P)+] (357 aa).

Positions 30, 31, 51, and 124 each coordinate NADPH. Sn-glycerol 3-phosphate-binding residues include lysine 124 and glycine 152. Alanine 156 serves as a coordination point for NADPH. 5 residues coordinate sn-glycerol 3-phosphate: lysine 207, aspartate 260, serine 270, arginine 271, and asparagine 272. The active-site Proton acceptor is the lysine 207. Arginine 271 contributes to the NADPH binding site. Position 297 (glutamate 297) interacts with NADPH.

It belongs to the NAD-dependent glycerol-3-phosphate dehydrogenase family.

The protein resides in the cytoplasm. It catalyses the reaction sn-glycerol 3-phosphate + NAD(+) = dihydroxyacetone phosphate + NADH + H(+). The enzyme catalyses sn-glycerol 3-phosphate + NADP(+) = dihydroxyacetone phosphate + NADPH + H(+). Its pathway is membrane lipid metabolism; glycerophospholipid metabolism. Functionally, catalyzes the reduction of the glycolytic intermediate dihydroxyacetone phosphate (DHAP) to sn-glycerol 3-phosphate (G3P), the key precursor for phospholipid synthesis. This is Glycerol-3-phosphate dehydrogenase [NAD(P)+] from Acinetobacter baumannii (strain SDF).